We begin with the raw amino-acid sequence, 1179 residues long: Stress response protein NST1 (1179 aa).

Disordered regions lie at residues 1–64, 147–189, 255–351, 537–619, 660–819, 928–947, and 957–997; these read MSET…LNDP, TVNT…SNSS, KRQQ…NHSH, AAWI…EEEK, EAEE…DISQ, SSQA…PQLS, and SLSQ…VWNP. Basic and acidic residues predominate over residues 10–22; that stretch reads DVSKFKNGDDVHF. Residues 24–38 are compositionally biased toward polar residues; the sequence is YNSTTNDQTINSTNV. A compositionally biased stretch (basic residues) spans 39 to 53; that stretch reads QKKKKKKKSKNKHKG. The span at 149–178 shows a compositional bias: low complexity; the sequence is NTSNNHQNNSNTQGGSTSTSGGALNGSSTN. Basic and acidic residues predominate over residues 262–278; the sequence is YKQERDAHHDHHNHEPG. A compositionally biased stretch (low complexity) spans 282–299; that stretch reads SDTGSSGDYDGSTQQDQQ. The segment covering 300-347 has biased composition (basic and acidic residues); the sequence is HQYEHEIEHAFQEDEHEDECGHKNDHSHSHSHSHTENHNHSHSYDPNH. The segment covering 564–616 has biased composition (acidic residues); the sequence is ELEEELNDEYDEVDEDDDEGEEEGEEEEEELDDEEFEEDEEEDASDTESEISE. A coiled-coil region spans residues 648 to 810; sequence SQDRTRTLIE…KSAKKQDHKE (163 aa). Basic and acidic residues-rich tracts occupy residues 663 to 681 and 690 to 812; these read ENAK…EKAK and AKEE…KETG. Over residues 957-977 the composition is skewed to low complexity; the sequence is SLSQNSLSSNANENLNTNPLN.

Belongs to the NST1 family.

The protein localises to the cytoplasm. In terms of biological role, may act as a negative regulator of salt tolerance. This chain is Stress response protein NST1 (NST1), found in Debaryomyces hansenii (strain ATCC 36239 / CBS 767 / BCRC 21394 / JCM 1990 / NBRC 0083 / IGC 2968) (Yeast).